A 215-amino-acid chain; its full sequence is Uridine kinase (215 aa).

16 to 23 (GASASGKS) serves as a coordination point for ATP.

Belongs to the uridine kinase family.

It is found in the cytoplasm. The enzyme catalyses uridine + ATP = UMP + ADP + H(+). It catalyses the reaction cytidine + ATP = CMP + ADP + H(+). It participates in pyrimidine metabolism; CTP biosynthesis via salvage pathway; CTP from cytidine: step 1/3. It functions in the pathway pyrimidine metabolism; UMP biosynthesis via salvage pathway; UMP from uridine: step 1/1. This Aliivibrio salmonicida (strain LFI1238) (Vibrio salmonicida (strain LFI1238)) protein is Uridine kinase.